The following is a 327-amino-acid chain: GMP reductase (327 aa).

Cysteine 176 functions as the Thioimidate intermediate in the catalytic mechanism. 205–228 is an NADP(+) binding site; it reads IIADGGIRTHGDIAKSIRFGASMV.

Belongs to the IMPDH/GMPR family. GuaC type 2 subfamily.

The enzyme catalyses IMP + NH4(+) + NADP(+) = GMP + NADPH + 2 H(+). Catalyzes the irreversible NADPH-dependent deamination of GMP to IMP. It functions in the conversion of nucleobase, nucleoside and nucleotide derivatives of G to A nucleotides, and in maintaining the intracellular balance of A and G nucleotides. The chain is GMP reductase from Streptococcus pyogenes serotype M3 (strain ATCC BAA-595 / MGAS315).